Reading from the N-terminus, the 205-residue chain is Cytochrome c biogenesis ATP-binding export protein CcmA 1 (205 aa).

Residues 2–205 enclose the ABC transporter domain; that stretch reads LEARDLYCER…LALTGGGAGL (204 aa). Position 34–41 (34–41) interacts with ATP; sequence GGNGAGKT.

The protein belongs to the ABC transporter superfamily. CcmA exporter (TC 3.A.1.107) family. In terms of assembly, the complex is composed of two ATP-binding proteins (CcmA) and two transmembrane proteins (CcmB).

It is found in the cell inner membrane. It catalyses the reaction heme b(in) + ATP + H2O = heme b(out) + ADP + phosphate + H(+). Functionally, part of the ABC transporter complex CcmAB involved in the biogenesis of c-type cytochromes; once thought to export heme, this seems not to be the case, but its exact role is uncertain. Responsible for energy coupling to the transport system. The chain is Cytochrome c biogenesis ATP-binding export protein CcmA 1 from Salmonella typhimurium (strain LT2 / SGSC1412 / ATCC 700720).